The chain runs to 154 residues: Protein X (154 aa).

The tract at residues 68-117 is mitochondrial targeting sequence; that stretch reads PCALRFTSARRMETTVNAHRNLPKVLHKRTLGLSAMSTTDLEAYFKDCVF.

It belongs to the orthohepadnavirus protein X family. In terms of assembly, may form homodimer. May interact with host CEBPA, CFLAR, CREB1, DDB1, E4F1, HBXIP, HSPD1/HSP60, NFKBIA, POLR2E and SMAD4. Interacts with host SMC5-SMC6 complex and induces its degradation. Interacts with host TRPC4AP; leading to prevent ubiquitination of TRPC4AP. Interacts with host PLSCR1; this interaction promotes ubiquitination and degradation of HBx and impairs HBx-mediated cell proliferation. A fraction may be phosphorylated in insect cells and HepG2 cells, a human hepatoblastoma cell line. Phosphorylated in vitro by host protein kinase C or mitogen-activated protein kinase. N-acetylated in insect cells.

Its subcellular location is the host cytoplasm. It localises to the host nucleus. The protein resides in the host mitochondrion. In terms of biological role, multifunctional protein that plays a role in silencing host antiviral defenses and promoting viral transcription. Does not seem to be essential for HBV infection. May be directly involved in development of cirrhosis and liver cancer (hepatocellular carcinoma). Most of cytosolic activities involve modulation of cytosolic calcium. The effect on apoptosis is controversial depending on the cell types in which the studies have been conducted. May induce apoptosis by localizing in mitochondria and causing loss of mitochondrial membrane potential. May also modulate apoptosis by binding host CFLAR, a key regulator of the death-inducing signaling complex (DISC). Promotes viral transcription by using the host E3 ubiquitin ligase DDB1 to target the SMC5-SMC6 complex to proteasomal degradation. This host complex would otherwise bind to viral episomal DNA, and prevents its transcription. Moderately stimulates transcription of many different viral and cellular transcription elements. Promoters and enhancers stimulated by HBx contain DNA binding sites for NF-kappa-B, AP-1, AP-2, c-EBP, ATF/CREB, or the calcium-activated factor NF-AT. The sequence is that of Protein X from Homo sapiens (Human).